We begin with the raw amino-acid sequence, 146 residues long: VVWTNEERSIISSIFSNLDYDDIGPKALCRCLIVYPWTQRHFTTFGNLYTPEAIMTNSKVAEHGVKVLHGLDRAVKNMDNIKATYYDLSILHSEKLHVDPDNFKLLSDCLTIVVAAKMGSGFTPETQAAFQKFLAVVVSALGKQYH.

The Globin domain maps to 2–146; the sequence is VWTNEERSII…VVSALGKQYH (145 aa). Positions 63 and 92 each coordinate heme b.

It belongs to the globin family. As to quaternary structure, hb1 is a heterotetramer of two alpha chains and two beta-1 chains. As to expression, red blood cells.

Its function is as follows. Involved in oxygen transport from gills to the various peripheral tissues. The protein is Hemoglobin subunit beta-1 (hbb1) of Pseudaphritis urvillii (Congolli).